A 185-amino-acid chain; its full sequence is ATP-dependent protease subunit HslV (185 aa).

Residue Thr13 is part of the active site. Na(+) contacts are provided by Gly167, Cys170, and Thr173.

Belongs to the peptidase T1B family. HslV subfamily. A double ring-shaped homohexamer of HslV is capped on each side by a ring-shaped HslU homohexamer. The assembly of the HslU/HslV complex is dependent on binding of ATP.

The protein localises to the cytoplasm. It carries out the reaction ATP-dependent cleavage of peptide bonds with broad specificity.. With respect to regulation, allosterically activated by HslU binding. Functionally, protease subunit of a proteasome-like degradation complex believed to be a general protein degrading machinery. The protein is ATP-dependent protease subunit HslV of Sinorhizobium fredii (strain NBRC 101917 / NGR234).